We begin with the raw amino-acid sequence, 350 residues long: 2-oxoglutarate and iron-dependent oxygenase domain-containing protein 2 (350 aa).

The region spanning 215 to 309 is the Fe2OG dioxygenase domain; that stretch reads DSHRAFVVKY…RWNLVVWLRA (95 aa). 3 residues coordinate Fe cation: H235, D237, and H290. R300 lines the 2-oxoglutarate pocket.

It belongs to the OGFOD2 family. The cofactor is Fe(2+). L-ascorbate is required as a cofactor.

This is 2-oxoglutarate and iron-dependent oxygenase domain-containing protein 2 (OGFOD2) from Homo sapiens (Human).